Consider the following 213-residue polypeptide: Orotate phosphoribosyltransferase (213 aa).

Lysine 26 serves as a coordination point for 5-phospho-alpha-D-ribose 1-diphosphate. 34–35 (FF) contacts orotate. 5-phospho-alpha-D-ribose 1-diphosphate-binding positions include 72–73 (YK), arginine 99, lysine 100, lysine 103, histidine 105, and 124–132 (DDVITAGTA). Residues threonine 128 and arginine 156 each contribute to the orotate site.

It belongs to the purine/pyrimidine phosphoribosyltransferase family. PyrE subfamily. Homodimer. Mg(2+) serves as cofactor.

It catalyses the reaction orotidine 5'-phosphate + diphosphate = orotate + 5-phospho-alpha-D-ribose 1-diphosphate. It functions in the pathway pyrimidine metabolism; UMP biosynthesis via de novo pathway; UMP from orotate: step 1/2. Catalyzes the transfer of a ribosyl phosphate group from 5-phosphoribose 1-diphosphate to orotate, leading to the formation of orotidine monophosphate (OMP). This is Orotate phosphoribosyltransferase from Klebsiella pneumoniae subsp. pneumoniae (strain ATCC 700721 / MGH 78578).